A 399-amino-acid polypeptide reads, in one-letter code: Coiled-coil domain-containing protein 85C-B (399 aa).

Coiled coils occupy residues 52-84 (NRSLQVHLHEIRNLKEINQKLQDDNQELRELCC) and 113-144 (KEVSTYQQKLKELEINQENVLRENAELKDIIL). Residues 151 to 199 (NGAGSRSSIDSQSSLSNLNGGSGTVRDVGDGSSTSSGGSAGSPDHHHNH) form a disordered region. Residues 155–169 (SRSSIDSQSSLSNLN) show a composition bias toward low complexity.

This sequence belongs to the CCDC85 family.

It localises to the cell junction. It is found in the tight junction. The protein resides in the adherens junction. Its function is as follows. May play a role in cell-cell adhesion and epithelium development through its interaction with proteins of the beta-catenin family. May play an important role in cortical development, especially in the maintenance of radial glia. In Danio rerio (Zebrafish), this protein is Coiled-coil domain-containing protein 85C-B (ccdc85cb).